The following is a 277-amino-acid chain: Myelin proteolipid protein (277 aa).

Residues 1 to 10 (MGLLECCARC) lie on the Cytoplasmic side of the membrane. S-palmitoyl cysteine attachment occurs at residues cysteine 6, cysteine 7, and cysteine 10. The chain crosses the membrane as a helical span at residues 11 to 36 (LVGAPFASLVATGLCFFGVALFCGCG). Residues 37–59 (HEALTGTEKLIETYFSKNYQDYE) are Extracellular-facing. A helical membrane pass occupies residues 60 to 88 (YLINVIHAFQYVIYGTASFFFLYGALLLA). Residues 89 to 151 (EGFYTTGAVR…LGKWLGHPDK (63 aa)) lie on the Cytoplasmic side of the membrane. Cysteine 109 carries S-palmitoyl cysteine lipidation. Residue serine 114 is modified to Phosphoserine. 2 positions are modified to phosphothreonine: threonine 116 and threonine 118. 2 S-palmitoyl cysteine lipidation sites follow: cysteine 139 and cysteine 141. The chain crosses the membrane as a helical span at residues 152-178 (FVGITYALTIVWLLVFACSAVPVYIYF). The Extracellular portion of the chain corresponds to 179-238 (NTWTTCQSIAFPSKTSASIGSLCADARMYGVLPWNAFPGKVCGSNLLSICKTAEFQMTFH). Intrachain disulfides connect cysteine 184–cysteine 228 and cysteine 201–cysteine 220. The O-palmitoyl serine moiety is linked to residue serine 199. A helical transmembrane segment spans residues 239–268 (LFIAAFVGAAATLVSLLTFMIAATYNFAVL). At 269-277 (KLMGRGTKF) the chain is on the cytoplasmic side.

It belongs to the myelin proteolipid protein family.

Its subcellular location is the cell membrane. The protein localises to the myelin membrane. This is the major myelin protein from the central nervous system. It plays an important role in the formation or maintenance of the multilamellar structure of myelin. This is Myelin proteolipid protein (PLP1) from Canis lupus familiaris (Dog).